Here is a 190-residue protein sequence, read N- to C-terminus: Large ribosomal subunit protein uL5 (190 aa).

It belongs to the universal ribosomal protein uL5 family. In terms of assembly, part of the 50S ribosomal subunit; part of the 5S rRNA/L5/L18/L25 subcomplex. Contacts the 5S rRNA and the P site tRNA. Forms a bridge to the 30S subunit in the 70S ribosome.

In terms of biological role, this is one of the proteins that bind and probably mediate the attachment of the 5S RNA into the large ribosomal subunit, where it forms part of the central protuberance. In the 70S ribosome it contacts protein S13 of the 30S subunit (bridge B1b), connecting the 2 subunits; this bridge is implicated in subunit movement. Contacts the P site tRNA; the 5S rRNA and some of its associated proteins might help stabilize positioning of ribosome-bound tRNAs. The sequence is that of Large ribosomal subunit protein uL5 from Corynebacterium efficiens (strain DSM 44549 / YS-314 / AJ 12310 / JCM 11189 / NBRC 100395).